Consider the following 397-residue polypeptide: tRNA-specific 2-thiouridylase MnmA (397 aa).

ATP-binding positions include 6 to 13 and L32; that span reads AMSGGVDS. C101 functions as the Nucleophile in the catalytic mechanism. C101 and C199 form a disulfide bridge. ATP is bound at residue G125. Residues 148–150 form an interaction with tRNA region; that stretch reads KDQ. C199 (cysteine persulfide intermediate) is an active-site residue.

It belongs to the MnmA/TRMU family.

It is found in the cytoplasm. The catalysed reaction is S-sulfanyl-L-cysteinyl-[protein] + uridine(34) in tRNA + AH2 + ATP = 2-thiouridine(34) in tRNA + L-cysteinyl-[protein] + A + AMP + diphosphate + H(+). Catalyzes the 2-thiolation of uridine at the wobble position (U34) of tRNA, leading to the formation of s(2)U34. The polypeptide is tRNA-specific 2-thiouridylase MnmA (Clavibacter sepedonicus (Clavibacter michiganensis subsp. sepedonicus)).